The sequence spans 155 residues: Leader peptidase HopD (155 aa).

This sequence belongs to the peptidase A24 family.

In Escherichia coli, this protein is Leader peptidase HopD (hopD).